Reading from the N-terminus, the 137-residue chain is uncharacterized protein (137 aa).

The HTH merR-type domain occupies 4-73; that stretch reads MLTVSEVARK…LEEIADILHL (70 aa). A DNA-binding region (H-T-H motif) is located at residues 8–27; it reads SEVARKLGLNPQTLYFYERI.

This is an uncharacterized protein from Synechocystis sp. (strain ATCC 27184 / PCC 6803 / Kazusa).